Reading from the N-terminus, the 305-residue chain is Protein FdhE homolog (305 aa).

The protein belongs to the FdhE family.

Its subcellular location is the cytoplasm. Necessary for formate dehydrogenase activity. In Haemophilus ducreyi (strain 35000HP / ATCC 700724), this protein is Protein FdhE homolog.